The chain runs to 416 residues: Transmembrane protease serine 11B-like protein (416 aa).

Topologically, residues 1-15 (MYRPVIASRKSIPPW) are cytoplasmic. A helical; Signal-anchor for type II membrane protein membrane pass occupies residues 16–36 (LIILCVLGVLAALGIIIGLLV). Over 37–416 (HFLAVENKIY…RNWIASKTGI (380 aa)) the chain is Extracellular. The SEA domain occupies 44 to 161 (KIYYYQGGFK…GSLKLTEISK (118 aa)). Asn-107 is a glycosylation site (N-linked (GlcNAc...) asparagine). A Peptidase S1 domain is found at 185–415 (ITGGSTAHKG…YRNWIASKTG (231 aa)). Cysteines 210 and 226 form a disulfide. His-225 acts as the Charge relay system in catalysis. Residue Asn-235 is glycosylated (N-linked (GlcNAc...) asparagine). Asp-270 functions as the Charge relay system in the catalytic mechanism. 2 cysteine pairs are disulfide-bonded: Cys-335/Cys-351 and Cys-362/Cys-391. Ser-366 (charge relay system) is an active-site residue.

It belongs to the peptidase S1 family. Expressed in esophagus, cervix, tongue, and testes.

The protein resides in the cell membrane. Inhibited by aprotinin, leupeptin, benzamidine, SERPINA1, SPINT1 and SPINT2. Its function is as follows. Serine protease. This chain is Transmembrane protease serine 11B-like protein (Tmprss11b), found in Mus musculus (Mouse).